The following is a 451-amino-acid chain: UPF0761 membrane protein Hhal_0704 (451 aa).

A run of 6 helical transmembrane segments spans residues 66-86 (LLAIVPLMTIGFSVLAAFPVF), 122-142 (ELTAVGIAGLTVTALLLLNTI), 162-182 (FMVYWTVLTMGPLLLGVSVAS), 204-224 (LLNLAPFVVQAIVFSLIYSLV), 228-248 (SVPVLHAVIGGVVASGLFELA), and 268-288 (ALAALPIFLVWLYISWLVILI).

It belongs to the UPF0761 family.

The protein localises to the cell inner membrane. This chain is UPF0761 membrane protein Hhal_0704, found in Halorhodospira halophila (strain DSM 244 / SL1) (Ectothiorhodospira halophila (strain DSM 244 / SL1)).